Consider the following 102-residue polypeptide: NADH-quinone oxidoreductase subunit K (102 aa).

3 helical membrane-spanning segments follow: residues 6-26 (LEHG…GLMV), 30-50 (ILFV…AFVV), and 62-82 (VMFI…LAIL).

This sequence belongs to the complex I subunit 4L family. As to quaternary structure, NDH-1 is composed of 13 different subunits. Subunits NuoA, H, J, K, L, M, N constitute the membrane sector of the complex.

Its subcellular location is the cell inner membrane. It catalyses the reaction a quinone + NADH + 5 H(+)(in) = a quinol + NAD(+) + 4 H(+)(out). Functionally, NDH-1 shuttles electrons from NADH, via FMN and iron-sulfur (Fe-S) centers, to quinones in the respiratory chain. The immediate electron acceptor for the enzyme in this species is believed to be ubiquinone. Couples the redox reaction to proton translocation (for every two electrons transferred, four hydrogen ions are translocated across the cytoplasmic membrane), and thus conserves the redox energy in a proton gradient. This is NADH-quinone oxidoreductase subunit K from Pseudomonas syringae pv. syringae (strain B728a).